The following is a 450-amino-acid chain: Sulfite exporter TauE/SafE family protein 1 (450 aa).

Transmembrane regions (helical) follow at residues 5–25, 48–68, 70–90, 97–117, 130–150, 153–173, 223–243, 261–281, 316–336, 340–360, 378–398, and 408–428; these read LVPL…SALA, TIEV…AASI, SAGG…IAGL, SFSA…NLFL, FDLA…GVIC, MFPN…STMK, FPWM…SINL, ALYW…TLCI, VMAL…GMLI, LLQI…MVLF, GTAA…LMVV, and ASII…LMTT.

Belongs to the 4-toluene sulfonate uptake permease (TSUP) (TC 2.A.102) family.

The protein localises to the membrane. The polypeptide is Sulfite exporter TauE/SafE family protein 1 (Arabidopsis thaliana (Mouse-ear cress)).